A 1042-amino-acid polypeptide reads, in one-letter code: Exosome RNA helicase MTR4 (1042 aa).

Residue alanine 2 is modified to N-acetylalanine. The interval 16–74 is disordered; sequence DSTTAAGTKKDKEKDKGKWKGPPGSADKAGKRFDGKLQSESTNNGKNKRDVDFEGTDEP. Over residues 23–33 the composition is skewed to basic and acidic residues; the sequence is TKKDKEKDKGK. Residue lysine 24 forms a Glycyl lysine isopeptide (Lys-Gly) (interchain with G-Cter in SUMO2) linkage. The residue at position 40 (serine 40) is a Phosphoserine. Residues 43–52 show a composition bias toward basic and acidic residues; sequence KAGKRFDGKL. An N6-acetyllysine mark is found at lysine 51 and lysine 78. ATP is bound by residues isoleucine 139, 161–168, serine 164, glycine 166, lysine 167, and threonine 168; that span reads AHTSAGKT. One can recognise a Helicase ATP-binding domain in the interval 148–304; it reads IQCVDNNQSV…WICHLHKQPC (157 aa). A DEIH box motif is present at residues 252 to 255; the sequence is DEIH. Residue lysine 358 forms a Glycyl lysine isopeptide (Lys-Gly) (interchain with G-Cter in SUMO2) linkage. The Helicase C-terminal domain maps to 405–577; the sequence is QMTKLDFNTD…NMVLNLLRVE (173 aa). Residues lysine 684 and lysine 723 each participate in a glycyl lysine isopeptide (Lys-Gly) (interchain with G-Cter in SUMO2) cross-link.

It belongs to the helicase family. SKI2 subfamily. As to quaternary structure, component of a TRAMP-like complex, an ATP-dependent exosome regulatory complex consisting of a helicase (MTREX), an oligadenylate polymerase (TENT4B or TENT4A), and a substrate specific RNA-binding factor (ZCCHC7 or ZCCHC8). Several TRAMP-like complexes exist with specific compositions and are associated with nuclear, or nucleolar RNA exosomes. Identified in the spliceosome C complex. Component of the poly(A) tail exosome targeting (PAXT) complex made of PABPN1, ZFC3H1 and MTREX that directs a subset of long and polyadenylated poly(A) RNAs for exosomal degradation. Component of the nuclear exosome targeting (NEXT) complex composed of MTREX, ZCCHC8, and RBM7 that directs a subset of non-coding short-lived RNAs for exosomal degradation. Interacts with ZCCHC8; this interaction bridges the interaction between RBM7 and MTREX. Binds to ZFC3H1 and RBM7 in a RNase-insensitive manner. Interacts with EXOSC10; the interaction mediates the association of MTREX with nuclear RNA exosomes. Interacts with isoform 1 of NVL in an ATP-dependent manner; the interaction is required to associate NVL with nuclear RNA exosome. Interacts with WDR74; the interaction dissociation in a late stage of rRNA synthesis is required for appropriate maturation of pre-60S particles and depends on the ATPase activity of NVL. Interacts with MPHOSPH6. Interacts with the RNA cap-binding complex proteins NCBP1 and SRRT. Interacts with NRDE2; the interaction is direct and negatively regulates MTREX function in exosomal degradation by changing its conformation precluding interaction with ZFC3H1, the RNA cap-binding complex proteins NCBP1 and SRRT, and association with the exosome. Associates with the RNA exosome complex.

Its subcellular location is the nucleus. It is found in the nucleoplasm. It localises to the nucleolus. The protein localises to the nucleus speckle. The enzyme catalyses ATP + H2O = ADP + phosphate + H(+). Activated when MTREX is incorporated into NEXT complex an the nuclear RNA exosome complex. Catalyzes the ATP-dependent unwinding of RNA duplexes with a single-stranded 3' RNA extension. Central subunit of many protein complexes, namely TRAMP-like, nuclear exosome targeting (NEXT) and poly(A) tail exosome targeting (PAXT). NEXT functions as an RNA exosome cofactor that directs a subset of non-coding short-lived RNAs for exosomal degradation. NEXT is involved in surveillance and turnover of aberrant transcripts and non-coding RNAs. PAXT directs a subset of long and polyadenylated poly(A) RNAs for exosomal degradation. The RNA exosome is fundamental for the degradation of RNA in eukaryotic nuclei. Substrate targeting is facilitated by its cofactor ZCCHC8, which links to RNA-binding protein adapters. Associated with the RNA exosome complex and involved in the 3'-processing of the 7S pre-RNA to the mature 5.8S rRNA. May be involved in pre-mRNA splicing. In the context of NEXT complex can also in vitro unwind DNA:RNA heteroduplexes with a 3' poly (A) RNA tracking strand. Can promote unwinding and degradation of structured RNA substrates when associated with the nuclear exosome and its cofactors. Can displace a DNA strand while translocating on RNA to ultimately degrade the RNA within a DNA/RNA heteroduplex. Plays a role in DNA damage response. This chain is Exosome RNA helicase MTR4, found in Homo sapiens (Human).